Consider the following 313-residue polypeptide: Protein PHOSPHATE-INDUCED 1 (313 aa).

A signal peptide spans 1–22 (MATSHFILKLFLVISFCNVCFA). The N-linked (GlcNAc...) asparagine glycan is linked to Asn-119.

Belongs to the EXORDIUM family.

It localises to the secreted. Its subcellular location is the extracellular space. The protein resides in the apoplast. In terms of biological role, may be involved in the regulation of cell division. The polypeptide is Protein PHOSPHATE-INDUCED 1 (Nicotiana tabacum (Common tobacco)).